The sequence spans 480 residues: PTS system sucrose-specific EIIBC component (480 aa).

The PTS EIIB type-1 domain maps to 4–87; sequence KKSAENILQA…EKITGKEASS (84 aa). The active-site Phosphocysteine intermediate; for EIIB activity is Cys-26. Helical transmembrane passes span 109 to 129, 158 to 178, 182 to 202, 264 to 284, 303 to 323, 349 to 369, 405 to 425, and 449 to 469; these read LSDI…LMGI, MINI…GFSA, FGGN…PELM, LLTP…FVGP, FGGA…VITG, PIAT…FFII, PFIG…FFKV, and LHYG…TYAL. Residues 120–480 enclose the PTS EIIC type-1 domain; that stretch reads IVAGGLLMGI…YRKKYRNIEA (361 aa).

Its subcellular location is the cell membrane. The catalysed reaction is N(pros)-phospho-L-histidyl-[protein](out) + sucrose = sucrose 6(G)-phosphate(in) + L-histidyl-[protein]. The phosphoenolpyruvate-dependent sugar phosphotransferase system (sugar PTS), a major carbohydrate active transport system, catalyzes the phosphorylation of incoming sugar substrates concomitantly with their translocation across the cell membrane. This system is involved in sucrose transport. The sequence is that of PTS system sucrose-specific EIIBC component from Staphylococcus xylosus.